A 228-amino-acid chain; its full sequence is Probable septum site-determining protein MinC (228 aa).

The protein belongs to the MinC family. Interacts with MinD and FtsZ.

Functionally, cell division inhibitor that blocks the formation of polar Z ring septums. Rapidly oscillates between the poles of the cell to destabilize FtsZ filaments that have formed before they mature into polar Z rings. Prevents FtsZ polymerization. In Oceanobacillus iheyensis (strain DSM 14371 / CIP 107618 / JCM 11309 / KCTC 3954 / HTE831), this protein is Probable septum site-determining protein MinC.